Here is a 186-residue protein sequence, read N- to C-terminus: MNDYINGFLYKIDDKFLYLELNYLGYRYLYLKSDLKNFKLNENNKVYIAINVIDNHFKYYGFFNQLVRDLFEILININTIGEKTAFLILENYSYQELIDIFKNGKTDKILQLKGIGNYTARLIINSVQKELFNNKISEKKNKVITSLEKLGYKTKDIYKIIINVDEDLTIDELTKYVLEKLSYINN.

The interval 1–63 (MNDYINGFLY…DNHFKYYGFF (63 aa)) is domain I. The tract at residues 64 to 137 (NQLVRDLFEI…QKELFNNKIS (74 aa)) is domain II. Ser-137 is a region of interest (flexible linker). The domain III stretch occupies residues 137–186 (SEKKNKVITSLEKLGYKTKDIYKIIINVDEDLTIDELTKYVLEKLSYINN).

The protein belongs to the RuvA family. As to quaternary structure, homotetramer. Forms an RuvA(8)-RuvB(12)-Holliday junction (HJ) complex. HJ DNA is sandwiched between 2 RuvA tetramers; dsDNA enters through RuvA and exits via RuvB. An RuvB hexamer assembles on each DNA strand where it exits the tetramer. Each RuvB hexamer is contacted by two RuvA subunits (via domain III) on 2 adjacent RuvB subunits; this complex drives branch migration. In the full resolvosome a probable DNA-RuvA(4)-RuvB(12)-RuvC(2) complex forms which resolves the HJ.

It is found in the cytoplasm. Functionally, the RuvA-RuvB-RuvC complex processes Holliday junction (HJ) DNA during genetic recombination and DNA repair, while the RuvA-RuvB complex plays an important role in the rescue of blocked DNA replication forks via replication fork reversal (RFR). RuvA specifically binds to HJ cruciform DNA, conferring on it an open structure. The RuvB hexamer acts as an ATP-dependent pump, pulling dsDNA into and through the RuvAB complex. HJ branch migration allows RuvC to scan DNA until it finds its consensus sequence, where it cleaves and resolves the cruciform DNA. This chain is Holliday junction branch migration complex subunit RuvA, found in Mycoplasma capricolum subsp. capricolum (strain California kid / ATCC 27343 / NCTC 10154).